The chain runs to 428 residues: 3-phosphoshikimate 1-carboxyvinyltransferase (428 aa).

Residues Lys-21, Ser-22, and Arg-26 each contribute to the 3-phosphoshikimate site. Lys-21 is a phosphoenolpyruvate binding site. Phosphoenolpyruvate is bound by residues Gly-91 and Arg-119. Residues Ser-164, Gln-166, Asp-313, and Lys-340 each contribute to the 3-phosphoshikimate site. Gln-166 serves as a coordination point for phosphoenolpyruvate. Residue Asp-313 is the Proton acceptor of the active site. Positions 344 and 386 each coordinate phosphoenolpyruvate.

Belongs to the EPSP synthase family. As to quaternary structure, monomer.

It localises to the cytoplasm. It catalyses the reaction 3-phosphoshikimate + phosphoenolpyruvate = 5-O-(1-carboxyvinyl)-3-phosphoshikimate + phosphate. It functions in the pathway metabolic intermediate biosynthesis; chorismate biosynthesis; chorismate from D-erythrose 4-phosphate and phosphoenolpyruvate: step 6/7. Functionally, catalyzes the transfer of the enolpyruvyl moiety of phosphoenolpyruvate (PEP) to the 5-hydroxyl of shikimate-3-phosphate (S3P) to produce enolpyruvyl shikimate-3-phosphate and inorganic phosphate. The protein is 3-phosphoshikimate 1-carboxyvinyltransferase of Campylobacter jejuni subsp. jejuni serotype O:2 (strain ATCC 700819 / NCTC 11168).